A 476-amino-acid polypeptide reads, in one-letter code: Aspartyl/glutamyl-tRNA(Asn/Gln) amidotransferase subunit B (476 aa).

Belongs to the GatB/GatE family. GatB subfamily. As to quaternary structure, heterotrimer of A, B and C subunits.

The enzyme catalyses L-glutamyl-tRNA(Gln) + L-glutamine + ATP + H2O = L-glutaminyl-tRNA(Gln) + L-glutamate + ADP + phosphate + H(+). It catalyses the reaction L-aspartyl-tRNA(Asn) + L-glutamine + ATP + H2O = L-asparaginyl-tRNA(Asn) + L-glutamate + ADP + phosphate + 2 H(+). Functionally, allows the formation of correctly charged Asn-tRNA(Asn) or Gln-tRNA(Gln) through the transamidation of misacylated Asp-tRNA(Asn) or Glu-tRNA(Gln) in organisms which lack either or both of asparaginyl-tRNA or glutaminyl-tRNA synthetases. The reaction takes place in the presence of glutamine and ATP through an activated phospho-Asp-tRNA(Asn) or phospho-Glu-tRNA(Gln). This Lactobacillus acidophilus (strain ATCC 700396 / NCK56 / N2 / NCFM) protein is Aspartyl/glutamyl-tRNA(Asn/Gln) amidotransferase subunit B.